The primary structure comprises 272 residues: MKEKIININSDLIKELRKRTSIGVVECKQALIKANGDLELAIDNMRRSGLKTACKKSGHITSSGLIAVEITSNKQYGIMIEINCETDFVAKDSTFQEFAKTVIITALNEKIHDINILQTRFKEQRTNLIAQVGENINIRRFVVLTGDFLGCYVHGFKIGVIVAASGNVTADLMKHISMHIAAKNPKYINVNDVPRNVIIRENNIQMDIAMKSGKSYKISEKITAGRMSKFFNDIVLTKQNFIMDINKTVEELLIEYHIKINNFARFELGEDM.

The involved in Mg(2+) ion dislocation from EF-Tu stretch occupies residues 86–89 (TDFV).

The protein belongs to the EF-Ts family.

It is found in the cytoplasm. Functionally, associates with the EF-Tu.GDP complex and induces the exchange of GDP to GTP. It remains bound to the aminoacyl-tRNA.EF-Tu.GTP complex up to the GTP hydrolysis stage on the ribosome. This Blochmanniella pennsylvanica (strain BPEN) protein is Elongation factor Ts.